The primary structure comprises 67 residues: Large ribosomal subunit protein uL29 (67 aa).

Belongs to the universal ribosomal protein uL29 family.

The chain is Large ribosomal subunit protein uL29 from Desulfitobacterium hafniense (strain DSM 10664 / DCB-2).